A 155-amino-acid chain; its full sequence is Ribonuclease H (155 aa).

The RNase H type-1 domain maps to 7 to 150 (AQNAVDLYTD…ADKLACKGRD (144 aa)). 4 residues coordinate Mg(2+): Asp16, Glu54, Asp77, and Asp142.

It belongs to the RNase H family. As to quaternary structure, monomer. Mg(2+) serves as cofactor.

The protein resides in the cytoplasm. It catalyses the reaction Endonucleolytic cleavage to 5'-phosphomonoester.. Endonuclease that specifically degrades the RNA of RNA-DNA hybrids. In Saccharopolyspora erythraea (strain ATCC 11635 / DSM 40517 / JCM 4748 / NBRC 13426 / NCIMB 8594 / NRRL 2338), this protein is Ribonuclease H.